Here is a 319-residue protein sequence, read N- to C-terminus: V-set and transmembrane domain-containing protein 4 (319 aa).

Residues 1–23 (MRLRLLALAAAVLLGPAPEVCGA) form the signal peptide. The region spanning 24–154 (LNVTVSPGPV…SSATEMRVIS (131 aa)) is the Ig-like domain. N-linked (GlcNAc...) asparagine glycans are attached at residues N25 and N41. A disulfide bridge links C46 with C126. The N-linked (GlcNAc...) asparagine glycan is linked to N143. A helical membrane pass occupies residues 180–200 (AVLVCCVGILSVLLFTLVIAW).

Post-translationally, proteolytically cleaved to generate a bioactive peptide. Peptide Lv is widely expressed in various tissues and the central nervous system, including the retinal photoreceptor layer, hippocampus, olfactory bulb, and cerebellum.

Its subcellular location is the cell membrane. It localises to the secreted. Peptide Lv enhances L-type voltage-gated calcium channel (L-VGCC) currents in retinal photoreceptors. This Mus musculus (Mouse) protein is V-set and transmembrane domain-containing protein 4 (Vstm4).